Here is a 46-residue protein sequence, read N- to C-terminus: Protein PsbN (46 aa).

Residues 10-30 traverse the membrane as a helical segment; it reads VSIAVLTALLGLTGFGIYTAF.

This sequence belongs to the PsbN family.

The protein resides in the cellular thylakoid membrane. May play a role in photosystem I and II biogenesis. This chain is Protein PsbN, found in Synechococcus sp. (strain RCC307).